We begin with the raw amino-acid sequence, 600 residues long: 1-deoxy-D-xylulose-5-phosphate synthase (600 aa).

Residues histidine 63 and 104 to 106 (GHS) contribute to the thiamine diphosphate site. Aspartate 135 serves as a coordination point for Mg(2+). Thiamine diphosphate contacts are provided by residues 136-137 (GA), asparagine 164, tyrosine 271, and glutamate 352. Asparagine 164 is a binding site for Mg(2+).

It belongs to the transketolase family. DXPS subfamily. As to quaternary structure, homodimer. Mg(2+) serves as cofactor. It depends on thiamine diphosphate as a cofactor.

The catalysed reaction is D-glyceraldehyde 3-phosphate + pyruvate + H(+) = 1-deoxy-D-xylulose 5-phosphate + CO2. The protein operates within metabolic intermediate biosynthesis; 1-deoxy-D-xylulose 5-phosphate biosynthesis; 1-deoxy-D-xylulose 5-phosphate from D-glyceraldehyde 3-phosphate and pyruvate: step 1/1. In terms of biological role, catalyzes the acyloin condensation reaction between C atoms 2 and 3 of pyruvate and glyceraldehyde 3-phosphate to yield 1-deoxy-D-xylulose-5-phosphate (DXP). This chain is 1-deoxy-D-xylulose-5-phosphate synthase, found in Campylobacter fetus subsp. fetus (strain 82-40).